Here is a 451-residue protein sequence, read N- to C-terminus: Phosphoglucosamine mutase (451 aa).

Catalysis depends on serine 103, which acts as the Phosphoserine intermediate. Residues serine 103, aspartate 243, aspartate 245, and aspartate 247 each contribute to the Mg(2+) site. Serine 103 is modified (phosphoserine).

This sequence belongs to the phosphohexose mutase family. Mg(2+) is required as a cofactor. Activated by phosphorylation.

The catalysed reaction is alpha-D-glucosamine 1-phosphate = D-glucosamine 6-phosphate. Catalyzes the conversion of glucosamine-6-phosphate to glucosamine-1-phosphate. The protein is Phosphoglucosamine mutase of Levilactobacillus brevis (strain ATCC 367 / BCRC 12310 / CIP 105137 / JCM 1170 / LMG 11437 / NCIMB 947 / NCTC 947) (Lactobacillus brevis).